Reading from the N-terminus, the 228-residue chain is MGQKVHPIGIRLGIVKEHTSVWYADGRTYADYLFADLKVREYLQDKLKSASVSRIDIHRPAQTARITIHTARPGIVIGKKGEDVEKLRQDLTKQMGVPVHINIEEIRKPELDGMLVAQSVAQQLERRVMFRRAMKRAVQNAMRIGAKGIKIQVSGRLGGAEIARTEWYREGRVPLHTLRADIDYANYEAHTTYGVIGVKVWIFKGEVIGGRQEELKPQAPAPRKKAAK.

The KH type-2 domain maps to 39–107; sequence VREYLQDKLK…PVHINIEEIR (69 aa).

This sequence belongs to the universal ribosomal protein uS3 family. As to quaternary structure, part of the 30S ribosomal subunit. Forms a tight complex with proteins S10 and S14.

Its function is as follows. Binds the lower part of the 30S subunit head. Binds mRNA in the 70S ribosome, positioning it for translation. In Pseudomonas syringae pv. syringae (strain B728a), this protein is Small ribosomal subunit protein uS3.